Here is a 138-residue protein sequence, read N- to C-terminus: Host cell factor C1 regulator 1 (138 aa).

An interaction with HCFC1 region spans residues 76-79; it reads DHPY. Residues 110–119 carry the Nuclear export signal motif; that stretch reads IPEALRLLRL.

As to quaternary structure, interacts with HCFC1. Widely expressed.

The protein localises to the cytoplasm. It is found in the nucleus. Its function is as follows. Regulates HCFC1 activity by modulating its subcellular localization. Overexpression of HCFC1R1 leads to accumulation of HCFC1 in the cytoplasm. HCFC1R1-mediated export may provide the pool of cytoplasmic HCFC1 required for import of virion-derived VP16 into the nucleus. This chain is Host cell factor C1 regulator 1 (HCFC1R1), found in Homo sapiens (Human).